The primary structure comprises 192 residues: Erythropoietin (192 aa).

The N-terminal stretch at 1–26 (MGVPERPTLLLLLSLLLIPLGLPVLC) is a signal peptide. Cys-33 and Cys-187 are oxidised to a cystine. Asn-50, Asn-64, and Asn-109 each carry an N-linked (GlcNAc...) asparagine glycan.

It belongs to the EPO/TPO family. In terms of tissue distribution, produced by kidney or liver of adult mammals and by liver of fetal or neonatal mammals.

The protein localises to the secreted. Hormone involved in the regulation of erythrocyte proliferation and differentiation and the maintenance of a physiological level of circulating erythrocyte mass. Binds to EPOR leading to EPOR dimerization and JAK2 activation thereby activating specific downstream effectors, including STAT1 and STAT3. The chain is Erythropoietin (Epo) from Rattus norvegicus (Rat).